Here is a 232-residue protein sequence, read N- to C-terminus: Ribonuclease 3 (232 aa).

An RNase III domain is found at 5-134; the sequence is ENLLFDRFGL…FLGALLLDKG (130 aa). Glu-47 is a Mg(2+) binding site. Residue Asp-51 is part of the active site. 2 residues coordinate Mg(2+): Asp-120 and Glu-123. Residue Glu-123 is part of the active site. The DRBM domain occupies 160–229; it reads DYKTKLQELL…AKNAFEKENH (70 aa).

This sequence belongs to the ribonuclease III family. In terms of assembly, homodimer. Requires Mg(2+) as cofactor.

The protein localises to the cytoplasm. The catalysed reaction is Endonucleolytic cleavage to 5'-phosphomonoester.. Digests double-stranded RNA. Involved in the processing of primary rRNA transcript to yield the immediate precursors to the large and small rRNAs (23S and 16S). Processes some mRNAs, and tRNAs when they are encoded in the rRNA operon. Processes pre-crRNA and tracrRNA of type II CRISPR loci if present in the organism. This is Ribonuclease 3 from Streptococcus gordonii (strain Challis / ATCC 35105 / BCRC 15272 / CH1 / DL1 / V288).